A 59-amino-acid chain; its full sequence is Small, acid-soluble spore protein H (59 aa).

Belongs to the SspH family.

The protein resides in the spore core. This is Small, acid-soluble spore protein H from Bacillus licheniformis (strain ATCC 14580 / DSM 13 / JCM 2505 / CCUG 7422 / NBRC 12200 / NCIMB 9375 / NCTC 10341 / NRRL NRS-1264 / Gibson 46).